The primary structure comprises 374 residues: tRNA-specific 2-thiouridylase MnmA (374 aa).

ATP-binding positions include 12–19 (GMSGGVDS) and Met-38. The interval 98–100 (NPD) is interaction with target base in tRNA. Cys-103 functions as the Nucleophile in the catalytic mechanism. Cys-103 and Cys-207 form a disulfide bridge. Gly-128 lines the ATP pocket. The tract at residues 157–159 (KDQ) is interaction with tRNA. Cys-207 functions as the Cysteine persulfide intermediate in the catalytic mechanism. The interaction with tRNA stretch occupies residues 321 to 322 (RY).

This sequence belongs to the MnmA/TRMU family.

The protein resides in the cytoplasm. It carries out the reaction S-sulfanyl-L-cysteinyl-[protein] + uridine(34) in tRNA + AH2 + ATP = 2-thiouridine(34) in tRNA + L-cysteinyl-[protein] + A + AMP + diphosphate + H(+). Its function is as follows. Catalyzes the 2-thiolation of uridine at the wobble position (U34) of tRNA, leading to the formation of s(2)U34. The protein is tRNA-specific 2-thiouridylase MnmA of Aliivibrio fischeri (strain MJ11) (Vibrio fischeri).